Reading from the N-terminus, the 327-residue chain is ABC transporter periplasmic-binding protein YphF (327 aa).

A signal peptide spans 1–26 (MPTKMRTTRNLLLMATLLGSALFARA).

The protein belongs to the bacterial solute-binding protein 2 family.

It localises to the periplasm. In terms of biological role, probably part of the binding-protein-dependent transport system YphDEF. The protein is ABC transporter periplasmic-binding protein YphF (yphF) of Escherichia coli (strain K12).